A 103-amino-acid polypeptide reads, in one-letter code: Small ribosomal subunit protein uS10 (103 aa).

This sequence belongs to the universal ribosomal protein uS10 family. Part of the 30S ribosomal subunit.

In terms of biological role, involved in the binding of tRNA to the ribosomes. This Pseudoalteromonas translucida (strain TAC 125) protein is Small ribosomal subunit protein uS10.